The sequence spans 492 residues: RNA-binding protein Nova-2 (492 aa).

The Bipartite nuclear localization signal motif lies at 10–26; it reads KRPLETPPEVVCTKRSN. One can recognise a KH 1 domain in the interval 32–99; that stretch reads EYFLKVLIPS…EALNAVHSFI (68 aa). Lysine 112 participates in a covalent cross-link: Glycyl lysine isopeptide (Lys-Gly) (interchain with G-Cter in SUMO2). KH domains are found at residues 130–196 and 406–473; these read AKQA…VSAI and KELV…QYLI.

In terms of assembly, interacts with PTBP2; the interaction is direct. Brain. Expression restricted to astrocytes.

The protein resides in the nucleus. Functionally, functions to regulate alternative splicing in neurons by binding pre-mRNA in a sequence-specific manner to activate exon inclusion or exclusion. It binds specifically to the sequences 5'-YCAY-3' and regulates splicing in only a subset of regulated exons. Binding to an exonic 5'-YCAY-3' cluster changes the protein complexes assembled on pre-mRNA, blocking U1 snRNP binding and exon inclusion, whereas binding to an intronic 5'-YCAY-3' cluster enhances spliceosome assembly and exon inclusion. With NOVA1, they perform unique biological functions in different brain areas and cell types. Uniquely regulates alternative splicing events of a series of axon guidance related genes during cortical development, being essential for central nervous system development by regulating neural networks wiring. Regulates differentially alternative splicing on the same transcripts expressed in different neurons. This includes functional differences in transcripts expressed in cortical and cerebellar excitatory versus inhibitory neurons where is required for, respectively, development of laminar structure and motor coordination and synapse formation. Also the regulation the regulation of intron retention can sequester the trans-acting splicing factor PTBP2, acting as a variable cis-acting scaffolding platform for PTBP2 across various natural conditions. The protein is RNA-binding protein Nova-2 of Homo sapiens (Human).